The chain runs to 362 residues: Aminomethyltransferase (362 aa).

It belongs to the GcvT family. As to quaternary structure, the glycine cleavage system is composed of four proteins: P, T, L and H.

The catalysed reaction is N(6)-[(R)-S(8)-aminomethyldihydrolipoyl]-L-lysyl-[protein] + (6S)-5,6,7,8-tetrahydrofolate = N(6)-[(R)-dihydrolipoyl]-L-lysyl-[protein] + (6R)-5,10-methylene-5,6,7,8-tetrahydrofolate + NH4(+). The glycine cleavage system catalyzes the degradation of glycine. The polypeptide is Aminomethyltransferase (Listeria innocua serovar 6a (strain ATCC BAA-680 / CLIP 11262)).